The following is an 870-amino-acid chain: MYDKNLEKEYYQICEERGYFEIDGNKTIQEKDKNFCIMMPPPNVTGVLHIGHALTFTLQDIMTRYKRMDGYKVLYQPGLDHAGIATQNVVEKQLLAQGIKKEELGREEFIEKVWEWKEQSGGKILDQMRTLGITPAWSRLRFTMDEGLVNAVKKAFVELYDKRLIVRGNYMINWCTHDGALSDIEVEYKENKGKLYHIKYFLKDSDEFLVVATTRPETFFGDTAVMVHPDDERYAKFVDKEVILPISKKAIKIIADEHVEKEFGTGVVKVTPAHDMNDYEVGLRHNLDFISVFDEKGILNEHCLEFQGLERLEAREKIVAKLESLGFIEKIEEYNNQIGYCYRCNNIVEPYISKQWFVKKEIAQESIEKVALGESKFYPNHWINSFNAWMKDLRDWCISRQLWWGHQIPVYYCECSHEWASQHTPKTCPKCQSQNFKQDEDVLDTWFSSGLWAMSTLGWGNENWGKDKIWSEKDLKDFYPNSLLITGFDILFFWVARMMFQSTNVLHQLPFKDIYLHALVKDEQGRKMSKSLGNVIDPNESIKEYSADILRFTLALLAIQGRDIKLSNDKLLQVRNFTNKIYNAKNYLLLNESKFEDLENITLHSELAKYIYAKFQTCVKDVRENLDNYRFNDAANTLYKFFWDDFCDWGIELSKAEKSSVKELGSIFKEALKLLNPFMPFISEYLYHKLSDTELKTSPSIMISKYPKFKEQDKNIEKIFSLLIESIVSIRRAKSLIDLGNSKIEKAYIKFNDKKIKDEIKAYMNFIIMLAKCEQIEFSEEKLPKAICDVSENLEIFITLENVDLSGILTRLENQKNKLEKESFKLNSMLSNEKFIANAPKEVVEQNKEALENLKIQLEKISVELQNLRG.

The 'HIGH' region signature appears at 42-52 (PNVTGVLHIGH). The short motif at 527–531 (KMSKS) is the 'KMSKS' region element. Lys-530 lines the ATP pocket. Residues 800 to 870 (LENVDLSGIL…ISVELQNLRG (71 aa)) are a coiled coil.

Belongs to the class-I aminoacyl-tRNA synthetase family. ValS type 1 subfamily. Monomer.

It localises to the cytoplasm. It carries out the reaction tRNA(Val) + L-valine + ATP = L-valyl-tRNA(Val) + AMP + diphosphate. Its function is as follows. Catalyzes the attachment of valine to tRNA(Val). As ValRS can inadvertently accommodate and process structurally similar amino acids such as threonine, to avoid such errors, it has a 'posttransfer' editing activity that hydrolyzes mischarged Thr-tRNA(Val) in a tRNA-dependent manner. The protein is Valine--tRNA ligase of Campylobacter jejuni (strain RM1221).